Consider the following 474-residue polypeptide: Trehalose-6-phosphate synthase (474 aa).

Position 10 (Arg10) interacts with D-glucose 6-phosphate. UDP-alpha-D-glucose is bound at residue 22–23; sequence GG. D-glucose 6-phosphate is bound by residues Tyr77 and Asp131. Residues Arg263 and Lys268 each coordinate UDP-alpha-D-glucose. Arg301 serves as a coordination point for D-glucose 6-phosphate. Residues Phe340 and 366–370 contribute to the UDP-alpha-D-glucose site; that span reads LVAKE.

It belongs to the glycosyltransferase 20 family. Homotetramer.

It catalyses the reaction D-glucose 6-phosphate + UDP-alpha-D-glucose = alpha,alpha-trehalose 6-phosphate + UDP + H(+). It participates in glycan biosynthesis; trehalose biosynthesis. Its function is as follows. Probably involved in the osmoprotection via the biosynthesis of trehalose. Catalyzes the transfer of glucose from UDP-alpha-D-glucose (UDP-Glc) to D-glucose 6-phosphate (Glc-6-P) to form trehalose-6-phosphate. Acts with retention of the anomeric configuration of the UDP-sugar donor. The polypeptide is Trehalose-6-phosphate synthase (Shigella dysenteriae serotype 1 (strain Sd197)).